The sequence spans 291 residues: m-AAA protease-interacting protein 1, mitochondrial (291 aa).

The N-terminal 96 residues, 1-96 (MALAARLLPL…SLPASPIRSY (96 aa)), are a transit peptide targeting the mitochondrion.

In terms of assembly, interacts with AFG3L2. Interacts with SPG7. Interacts with SMDT1/EMRE (via the N-terminal transit peptide); interaction is direct and takes place before maturation of SMDT1/EMRE.

It is found in the mitochondrion matrix. Its function is as follows. Promotes sorting of SMDT1/EMRE in mitochondria by ensuring its maturation. Interacts with the transit peptide region of SMDT1/EMRE precursor protein in the mitochondrial matrix, leading to protect it against protein degradation by YME1L1, thereby ensuring SMDT1/EMRE maturation by the mitochondrial processing peptidase (PMPCA and PMPCB). In Rattus norvegicus (Rat), this protein is m-AAA protease-interacting protein 1, mitochondrial.